Here is a 416-residue protein sequence, read N- to C-terminus: 3-oxoacyl-[acyl-carrier-protein] synthase 1 (416 aa).

In terms of domain architecture, Ketosynthase family 3 (KS3) spans 11-415 (FPSVVVTAVT…GHNVALAFGR (405 aa)). Catalysis depends on for beta-ketoacyl synthase activity residues C171, H311, and H345. Substrate is bound by residues H311 and H345.

The protein belongs to the thiolase-like superfamily. Beta-ketoacyl-ACP synthases family.

It localises to the cytoplasm. It catalyses the reaction an ultra-long-chain mono-unsaturated fatty acyl-[ACP] + malonyl-[ACP] + H(+) = a 3-oxo-ultra-long-chain mono-unsaturated fatty acyl-[ACP] + holo-[ACP] + CO2. Its pathway is lipid metabolism; mycolic acid biosynthesis. In terms of biological role, part of the mycobacterial fatty acid elongation system FAS-II, which is involved in mycolic acid biosynthesis. Catalyzes the elongation of long chain acyl-ACP substrates by the addition of two carbons from malonyl-ACP to an acyl acceptor. Involved in the initial extension of the mycolate chain and forms monounsaturated fatty acids that averaged 40 carbons in length. The polypeptide is 3-oxoacyl-[acyl-carrier-protein] synthase 1 (kasA) (Mycobacterium tuberculosis (strain ATCC 35801 / TMC 107 / Erdman)).